We begin with the raw amino-acid sequence, 145 residues long: uncharacterized protein (145 aa).

The segment at 71–95 (GARGRGRTYTKGGSSRSPASWAEQG) is disordered.

This is an uncharacterized protein from Homo sapiens (Human).